The primary structure comprises 366 residues: Alanine racemase (366 aa).

The Proton acceptor; specific for D-alanine role is filled by K40. An N6-(pyridoxal phosphate)lysine modification is found at K40. R136 contributes to the substrate binding site. Y263 acts as the Proton acceptor; specific for L-alanine in catalysis. M310 lines the substrate pocket.

The protein belongs to the alanine racemase family. Pyridoxal 5'-phosphate is required as a cofactor.

It carries out the reaction L-alanine = D-alanine. The protein operates within amino-acid biosynthesis; D-alanine biosynthesis; D-alanine from L-alanine: step 1/1. Functionally, catalyzes the interconversion of L-alanine and D-alanine. May also act on other amino acids. The protein is Alanine racemase (alr) of Streptococcus equi subsp. equi (strain 4047).